We begin with the raw amino-acid sequence, 207 residues long: Small ribosomal subunit protein uS4 (207 aa).

Residues Lys-31–Gln-55 form a disordered region. The segment covering Gly-42 to Gly-53 has biased composition (polar residues). One can recognise an S4 RNA-binding domain in the interval Ser-97–Leu-160.

It belongs to the universal ribosomal protein uS4 family. Part of the 30S ribosomal subunit. Contacts protein S5. The interaction surface between S4 and S5 is involved in control of translational fidelity.

One of the primary rRNA binding proteins, it binds directly to 16S rRNA where it nucleates assembly of the body of the 30S subunit. Its function is as follows. With S5 and S12 plays an important role in translational accuracy. The polypeptide is Small ribosomal subunit protein uS4 (Burkholderia orbicola (strain MC0-3)).